Here is a 681-residue protein sequence, read N- to C-terminus: Minichromosome maintenance domain-containing protein 2 (681 aa).

Position 292 is a phosphoserine (Ser-292). Residues 533-621 (KQFTTEDFEK…LIAALLLEIS (89 aa)) form the MCM domain.

In terms of tissue distribution, predominantly expressed in the gonads and the brain. Not detected in the heart, lung, nor embryonic fibroblasts.

Its function is as follows. Plays an important role in meiotic recombination and associated DNA double-strand break repair. This chain is Minichromosome maintenance domain-containing protein 2 (Mcmdc2), found in Mus musculus (Mouse).